The chain runs to 328 residues: Carbonic anhydrase-related protein 11 (328 aa).

Positions 1-23 are cleaved as a signal peptide; it reads MGAAARLSAPRALVLWAALGAAA. An Alpha-carbonic anhydrase domain is found at 33–303; the sequence is DWWSYKDNLQ…LAHRALRGNR (271 aa). 3 N-linked (GlcNAc...) asparagine glycosylation sites follow: Asn-118, Asn-170, and Asn-260. The tract at residues 299-328 is disordered; that stretch reads LRGNRDPRHPERRCRGPNYRLHVDGAPHGR. The span at 319 to 328 shows a compositional bias: basic and acidic residues; that stretch reads LHVDGAPHGR.

This sequence belongs to the alpha-carbonic anhydrase family.

It localises to the secreted. In terms of biological role, does not have a catalytic activity. This is Carbonic anhydrase-related protein 11 (CA11) from Pongo abelii (Sumatran orangutan).